Reading from the N-terminus, the 623-residue chain is Methionine--tRNA ligase (623 aa).

The short motif at 11-21 (PYANGPRHIGH) is the 'HIGH' region element. Residues Cys-143, Cys-146, Cys-156, and Cys-159 each contribute to the Zn(2+) site. Residues 347 to 351 (KFSSS) carry the 'KMSKS' region motif. Position 350 (Ser-350) interacts with ATP.

The protein belongs to the class-I aminoacyl-tRNA synthetase family. MetG type 1 subfamily. In terms of assembly, monomer. Zn(2+) serves as cofactor.

The protein localises to the cytoplasm. The enzyme catalyses tRNA(Met) + L-methionine + ATP = L-methionyl-tRNA(Met) + AMP + diphosphate. Is required not only for elongation of protein synthesis but also for the initiation of all mRNA translation through initiator tRNA(fMet) aminoacylation. This chain is Methionine--tRNA ligase, found in Bifidobacterium animalis subsp. lactis (strain AD011).